Consider the following 1052-residue polypeptide: Carbamoyl phosphate synthase large chain (1052 aa).

A carboxyphosphate synthetic domain region spans residues 1–399; that stretch reads MRENVKRVLV…ALQKAVRMLD (399 aa). The ATP site is built by Arg127, Arg167, Gly173, Gly174, Lys206, Leu208, Glu213, Gly239, Val240, His241, Gln282, and Glu296. Positions 131–325 constitute an ATP-grasp 1 domain; that stretch reads RETMINVNLP…LAYVSAKLAL (195 aa). 3 residues coordinate Mg(2+): Gln282, Glu296, and Asn298. The Mn(2+) site is built by Gln282, Glu296, and Asn298. The tract at residues 400–548 is oligomerization domain; it reads LGEPGIIGGK…VTYNGTEDDI (149 aa). A carbamoyl phosphate synthetic domain region spans residues 549-930; sequence EFSNGIRKLL…LKSWLSSSPN (382 aa). The ATP-grasp 2 domain occupies 674 to 864; sequence SRLLDKLGIK…IIDLALTGVI (191 aa). ATP is bound by residues Arg710, Lys749, Ile751, Glu756, Gly780, Val781, His782, Ser783, Gln823, and Glu835. Mg(2+) is bound by residues Gln823, Glu835, and Asn837. Mn(2+)-binding residues include Gln823, Glu835, and Asn837. Residues 930 to 1052 enclose the MGS-like domain; the sequence is NRLPDQKGIA…YEIGEYGAGI (123 aa). The allosteric domain stretch occupies residues 931-1052; the sequence is RLPDQKGIAL…YEIGEYGAGI (122 aa).

Belongs to the CarB family. Composed of two chains; the small (or glutamine) chain promotes the hydrolysis of glutamine to ammonia, which is used by the large (or ammonia) chain to synthesize carbamoyl phosphate. Tetramer of heterodimers (alpha,beta)4. Mg(2+) is required as a cofactor. It depends on Mn(2+) as a cofactor.

The catalysed reaction is hydrogencarbonate + L-glutamine + 2 ATP + H2O = carbamoyl phosphate + L-glutamate + 2 ADP + phosphate + 2 H(+). It catalyses the reaction hydrogencarbonate + NH4(+) + 2 ATP = carbamoyl phosphate + 2 ADP + phosphate + 2 H(+). It participates in amino-acid biosynthesis; L-arginine biosynthesis; carbamoyl phosphate from bicarbonate: step 1/1. It functions in the pathway pyrimidine metabolism; UMP biosynthesis via de novo pathway; (S)-dihydroorotate from bicarbonate: step 1/3. Functionally, large subunit of the glutamine-dependent carbamoyl phosphate synthetase (CPSase). CPSase catalyzes the formation of carbamoyl phosphate from the ammonia moiety of glutamine, carbonate, and phosphate donated by ATP, constituting the first step of 2 biosynthetic pathways, one leading to arginine and/or urea and the other to pyrimidine nucleotides. The large subunit (synthetase) binds the substrates ammonia (free or transferred from glutamine from the small subunit), hydrogencarbonate and ATP and carries out an ATP-coupled ligase reaction, activating hydrogencarbonate by forming carboxy phosphate which reacts with ammonia to form carbamoyl phosphate. The sequence is that of Carbamoyl phosphate synthase large chain from Sulfolobus acidocaldarius (strain ATCC 33909 / DSM 639 / JCM 8929 / NBRC 15157 / NCIMB 11770).